We begin with the raw amino-acid sequence, 579 residues long: Basic helix-loop-helix ARNT-like protein 2 (579 aa).

Residues 1-198 (MEFPRKRRGR…SPREKPIDTK (198 aa)) form an interaction with PER2 region. The short motif at 4–9 (PRKRRG) is the Nuclear localization signal element. The interval 40 to 61 (RTGVSAPSGIREAHSQMEKRRR) is disordered. Residues 48–101 (GIREAHSQMEKRRRDKMNHLIQKLSSMIPPHIPTAHKLDKLSVLRRAVQYLRSL) enclose the bHLH domain. Residues 50–59 (REAHSQMEKR) show a composition bias toward basic and acidic residues. A Nuclear export signal 1 motif is present at residues 118 to 128 (IQDKELSHLIL). The PAS 1 domain maps to 119–190 (QDKELSHLIL…KEQLSCDGSP (72 aa)). A compositionally biased stretch (basic and acidic residues) spans 186–196 (CDGSPREKPID). A disordered region spans residues 186–213 (CDGSPREKPIDTKTSQVYSHPYTGRPRM). Lysine 226 participates in a covalent cross-link: Glycyl lysine isopeptide (Lys-Gly) (interchain with G-Cter in SUMO2 and SUMO3). Residue lysine 233 forms a Glycyl lysine isopeptide (Lys-Gly) (interchain with G-Cter in SUMO2) linkage. Residues 296-366 (VPQKSGKINV…DKHKAVLQSK (71 aa)) enclose the PAS 2 domain. The short motif at 331 to 339 (LGYLPQELL) is the Nuclear export signal 2 element. The 44-residue stretch at 371–414 (TDSYKFRVKDGAFVTLKSEWFSFTNPWTKELEYIVSVNTLVLGR) folds into the PAC domain. The segment at 469–536 (RLHSSSPEDA…AHPHGPLPGD (68 aa)) is disordered.

Component of the circadian core oscillator, which includes the CRY proteins, CLOCK, or NPAS2, BMAL1 or BMAL2, CSNK1D and/or CSNK1E, TIMELESS and the PER proteins. Interacts directly with CLOCK to form the BMAL2-CLOCK transactivator. Can form heterodimers or homodimers which interact directly with CLOCK to form the transcription activator. Interacts with NPAS2 and HIF1A. Interacts with PER2. In terms of tissue distribution, expressed in the suprachiasmatic nucleus (SCN).

It localises to the nucleus. Transcriptional activator which forms a core component of the circadian clock. The circadian clock, an internal time-keeping system, regulates various physiological processes through the generation of approximately 24 hour circadian rhythms in gene expression, which are translated into rhythms in metabolism and behavior. It is derived from the Latin roots 'circa' (about) and 'diem' (day) and acts as an important regulator of a wide array of physiological functions including metabolism, sleep, body temperature, blood pressure, endocrine, immune, cardiovascular, and renal function. Consists of two major components: the central clock, residing in the suprachiasmatic nucleus (SCN) of the brain, and the peripheral clocks that are present in nearly every tissue and organ system. Both the central and peripheral clocks can be reset by environmental cues, also known as Zeitgebers (German for 'timegivers'). The predominant Zeitgeber for the central clock is light, which is sensed by retina and signals directly to the SCN. The central clock entrains the peripheral clocks through neuronal and hormonal signals, body temperature and feeding-related cues, aligning all clocks with the external light/dark cycle. Circadian rhythms allow an organism to achieve temporal homeostasis with its environment at the molecular level by regulating gene expression to create a peak of protein expression once every 24 hours to control when a particular physiological process is most active with respect to the solar day. Transcription and translation of core clock components (CLOCK, NPAS2, BMAL1, BMAL2, PER1, PER2, PER3, CRY1 and CRY2) plays a critical role in rhythm generation, whereas delays imposed by post-translational modifications (PTMs) are important for determining the period (tau) of the rhythms (tau refers to the period of a rhythm and is the length, in time, of one complete cycle). A diurnal rhythm is synchronized with the day/night cycle, while the ultradian and infradian rhythms have a period shorter and longer than 24 hours, respectively. Disruptions in the circadian rhythms contribute to the pathology of cardiovascular diseases, cancer, metabolic syndromes and aging. A transcription/translation feedback loop (TTFL) forms the core of the molecular circadian clock mechanism. Transcription factors, CLOCK or NPAS2 and BMAL1 or BMAL2, form the positive limb of the feedback loop, act in the form of a heterodimer and activate the transcription of core clock genes and clock-controlled genes (involved in key metabolic processes), harboring E-box elements (5'-CACGTG-3') within their promoters. The core clock genes: PER1/2/3 and CRY1/2 which are transcriptional repressors form the negative limb of the feedback loop and interact with the CLOCK|NPAS2-BMAL1|BMAL2 heterodimer inhibiting its activity and thereby negatively regulating their own expression. This heterodimer also activates nuclear receptors NR1D1/2 and RORA/B/G, which form a second feedback loop and which activate and repress BMAL1 transcription, respectively. The CLOCK-BMAL2 heterodimer activates the transcription of SERPINE1/PAI1 and BHLHE40/DEC1. In Mus musculus (Mouse), this protein is Basic helix-loop-helix ARNT-like protein 2 (Bmal2).